Here is a 943-residue protein sequence, read N- to C-terminus: WD repeat-containing protein 3 (943 aa).

5 WD repeats span residues 21-60, 63-102, 105-144, 147-186, and 189-228; these read SQKG…KILI, GLKQ…GNVT, GHKA…GLYR, GHKD…CFKT, and GHRT…EIED. 2 positions are modified to phosphoserine: S240 and S241. At T257 the chain carries Phosphothreonine. The stretch at 277 to 316 is one WD 6 repeat; sequence EGRDRVVNLAVDKTGRILACHGTDSVLELFCILSKKEIQK. The disordered stretch occupies residues 326-345; sequence RKKAKLHSSKGEEEDPEVNV. 7 WD repeats span residues 413-451, 453-493, 494-533, 547-586, 589-630, 631-670, and 673-712; these read GHRS…CIRT, TCEY…ETID, AHDG…DENS, QLDE…FFLS, GHKL…KSLF, AHDD…HIQT, and GHHQ…LILE. Residues K474 and K529 each participate in a glycyl lysine isopeptide (Lys-Gly) (interchain with G-Cter in SUMO2) cross-link. The residue at position 726 (S726) is a Phosphoserine.

It belongs to the WD repeat WDR3/UTP12 family. Part of the small subunit (SSU) processome, composed of more than 70 proteins and the RNA chaperone small nucleolar RNA (snoRNA) U3. As to expression, ubiquitous.

The protein resides in the nucleus. It is found in the nucleolus. Part of the small subunit (SSU) processome, first precursor of the small eukaryotic ribosomal subunit. During the assembly of the SSU processome in the nucleolus, many ribosome biogenesis factors, an RNA chaperone and ribosomal proteins associate with the nascent pre-rRNA and work in concert to generate RNA folding, modifications, rearrangements and cleavage as well as targeted degradation of pre-ribosomal RNA by the RNA exosome. The protein is WD repeat-containing protein 3 of Homo sapiens (Human).